A 101-amino-acid polypeptide reads, in one-letter code: MAKLSSINKNERRKKLVKAYAGKYARLKAIADDESKDETERLIARLKLAEIPRNANPTRVRNRCEVTGRPRAYYRKFRLCRVQLRDLANKGLIPGVTKSSW.

Belongs to the universal ribosomal protein uS14 family. In terms of assembly, part of the 30S ribosomal subunit. Contacts proteins S3 and S10.

Binds 16S rRNA, required for the assembly of 30S particles and may also be responsible for determining the conformation of the 16S rRNA at the A site. The chain is Small ribosomal subunit protein uS14 from Rhizorhabdus wittichii (strain DSM 6014 / CCUG 31198 / JCM 15750 / NBRC 105917 / EY 4224 / RW1) (Sphingomonas wittichii).